Consider the following 148-residue polypeptide: Snaclec 7 (148 aa).

Positions 1–23 (MGRFIFVSFGLLVVFLSLSGTGA) are cleaved as a signal peptide. 3 disulfide bridges follow: Cys-27–Cys-38, Cys-55–Cys-144, and Cys-121–Cys-136. A C-type lectin domain is found at 34 to 145 (HERHCYKVIN…CSSTHPFVCK (112 aa)).

This sequence belongs to the snaclec family. Heterodimer; disulfide-linked. As to expression, expressed by the venom gland.

It localises to the secreted. In terms of biological role, interferes with one step of hemostasis (modulation of platelet aggregation, or coagulation cascade, for example). In Echis pyramidum leakeyi (Leakey's carpet viper), this protein is Snaclec 7.